The following is a 432-amino-acid chain: UDP-N-acetylmuramate--L-alanine ligase (432 aa).

Gly108–Ser114 is a binding site for ATP.

This sequence belongs to the MurCDEF family.

The protein resides in the cytoplasm. It catalyses the reaction UDP-N-acetyl-alpha-D-muramate + L-alanine + ATP = UDP-N-acetyl-alpha-D-muramoyl-L-alanine + ADP + phosphate + H(+). Its pathway is cell wall biogenesis; peptidoglycan biosynthesis. Its function is as follows. Cell wall formation. This is UDP-N-acetylmuramate--L-alanine ligase from Bacillus licheniformis (strain ATCC 14580 / DSM 13 / JCM 2505 / CCUG 7422 / NBRC 12200 / NCIMB 9375 / NCTC 10341 / NRRL NRS-1264 / Gibson 46).